An 827-amino-acid chain; its full sequence is MQHPTNARYDFKTIESKWQKNWAENKTYSVTEDEDKEKYYLLEMFPYPSGRIHMGHVRNYTIGDVVARYKRMRGFNVLHPMGWDAFGLPAENAAQKNNTHPSVWTYDNIDYMRQQLQQLGLSYDWDREMATCNPKYYRQEQQLFIEMLEKGLIYEKVTTVNWCDTCQTVLANEQVIEGACWRCDQLVHPRKMNGWFFKITDYAEELLADLDKLTGWPEKVRTMQRNWIGKSTGLSCDFQLEDMDDKISIFTTRPDTIYGVTFMSLAPEHPLVEQLIAGTDREQEVRDFVKEVLEDKQRQDPTQEPEKKGIFTGKYCTNPFNGDRVPVYVANFVLIEYGTGAVMAVPAHDQRDFEFAGKYKLPIIPVVVPEGEAVNPADMEEALTNHGLLINSGDFTGMASQEAQAKIIAYAEEKGFGSPLTTYRLRDWGISRQRYWGAPIPIIHCDSCGIVPVPIDQLPVELPEDKDKSSVCAPLHQRPDFINTTCPKCGQPAKRETDTMDTFVESSWYFARYTSPRHTEAPLDKAKAKYWLAVDQYIGGVEHAILHLLYSRFFTKVLRDLGYLEIDEPFIKLLTQGMVIKDGTKMSKSKGNVVDPHDLISEFGADTTRLFSLFAAPPERDLEWSSEGVEGSSRFLNRIYRFITANFEALTAGEAFPKKLSEEDRLLHRKNHQTIKRVTENIEHNFHFNTAISAVMELVNQLFAQFKNEKSIAAPAVLRASVDSVLLLLSPMVPHFCNEMWMVLGNTEPIENQAWPEFDIEATKEDLLTIIIQVRGKVRSKIQVPVDIEEDEIVALALADENCQKFIDGQPIKKTIVVKKKLVNIVI.

The 'HIGH' region signature appears at 46 to 56 (PYPSGRIHMGH). The 'KMSKS' region motif lies at 585–589 (KMSKS). An ATP-binding site is contributed by Lys-588.

Belongs to the class-I aminoacyl-tRNA synthetase family.

The protein resides in the cytoplasm. It catalyses the reaction tRNA(Leu) + L-leucine + ATP = L-leucyl-tRNA(Leu) + AMP + diphosphate. The sequence is that of Leucine--tRNA ligase from Desulfotalea psychrophila (strain LSv54 / DSM 12343).